The chain runs to 299 residues: Protein LacX, chromosomal (299 aa).

The protein is Protein LacX, chromosomal (lacX) of Lactococcus lactis subsp. lactis (Streptococcus lactis).